Consider the following 383-residue polypeptide: S-adenosylmethionine synthase (383 aa).

ATP is bound at residue His-15. Position 17 (Asp-17) interacts with Mg(2+). Glu-43 provides a ligand contact to K(+). The L-methionine site is built by Glu-56 and Gln-99. The flexible loop stretch occupies residues 99–109; that stretch reads QSQDINQGVDR. ATP is bound by residues 164 to 166, 230 to 231, Asp-239, 245 to 246, Ala-262, and Lys-266; these read DAK, RF, and RK. Asp-239 provides a ligand contact to L-methionine. Lys-270 serves as a coordination point for L-methionine.

Belongs to the AdoMet synthase family. As to quaternary structure, homotetramer; dimer of dimers. Mg(2+) is required as a cofactor. The cofactor is K(+).

Its subcellular location is the cytoplasm. The enzyme catalyses L-methionine + ATP + H2O = S-adenosyl-L-methionine + phosphate + diphosphate. The protein operates within amino-acid biosynthesis; S-adenosyl-L-methionine biosynthesis; S-adenosyl-L-methionine from L-methionine: step 1/1. Functionally, catalyzes the formation of S-adenosylmethionine (AdoMet) from methionine and ATP. The overall synthetic reaction is composed of two sequential steps, AdoMet formation and the subsequent tripolyphosphate hydrolysis which occurs prior to release of AdoMet from the enzyme. The sequence is that of S-adenosylmethionine synthase from Actinobacillus succinogenes (strain ATCC 55618 / DSM 22257 / CCUG 43843 / 130Z).